The chain runs to 432 residues: Enolase (432 aa).

A (2R)-2-phosphoglycerate-binding site is contributed by Gln-167. The active-site Proton donor is the Glu-209. 3 residues coordinate Mg(2+): Asp-246, Glu-290, and Asp-317. Lys-342, Arg-371, Ser-372, and Lys-393 together coordinate (2R)-2-phosphoglycerate. Catalysis depends on Lys-342, which acts as the Proton acceptor.

Belongs to the enolase family. In terms of assembly, component of the RNA degradosome, a multiprotein complex involved in RNA processing and mRNA degradation. The cofactor is Mg(2+).

It localises to the cytoplasm. The protein resides in the secreted. It is found in the cell surface. It catalyses the reaction (2R)-2-phosphoglycerate = phosphoenolpyruvate + H2O. The protein operates within carbohydrate degradation; glycolysis; pyruvate from D-glyceraldehyde 3-phosphate: step 4/5. Its function is as follows. Catalyzes the reversible conversion of 2-phosphoglycerate (2-PG) into phosphoenolpyruvate (PEP). It is essential for the degradation of carbohydrates via glycolysis. The chain is Enolase from Klebsiella pneumoniae subsp. pneumoniae (strain ATCC 700721 / MGH 78578).